We begin with the raw amino-acid sequence, 63 residues long: Large ribosomal subunit protein bL35 (63 aa).

It belongs to the bacterial ribosomal protein bL35 family.

The protein is Large ribosomal subunit protein bL35 of Campylobacter curvus (strain 525.92).